Here is a 254-residue protein sequence, read N- to C-terminus: Alcohol dehydrogenase 1 (254 aa).

10 to 33 (FVAGLGGIGLDTSREIVKSGPKNL) contributes to the NAD(+) binding site. Residue Ser-138 coordinates substrate. Tyr-151 functions as the Proton acceptor in the catalytic mechanism.

It belongs to the short-chain dehydrogenases/reductases (SDR) family. Homodimer.

It carries out the reaction a primary alcohol + NAD(+) = an aldehyde + NADH + H(+). It catalyses the reaction a secondary alcohol + NAD(+) = a ketone + NADH + H(+). This is Alcohol dehydrogenase 1 (Adh1) from Drosophila montana (Fruit fly).